The primary structure comprises 550 residues: Chaperonin GroEL (550 aa).

Residues 30-33, lysine 51, 87-91, glycine 414, and aspartate 494 each bind ATP; these read TLGP and DGTTT.

The protein belongs to the chaperonin (HSP60) family. Forms a cylinder of 14 subunits composed of two heptameric rings stacked back-to-back. Interacts with the co-chaperonin GroES.

Its subcellular location is the cytoplasm. The enzyme catalyses ATP + H2O + a folded polypeptide = ADP + phosphate + an unfolded polypeptide.. Functionally, together with its co-chaperonin GroES, plays an essential role in assisting protein folding. The GroEL-GroES system forms a nano-cage that allows encapsulation of the non-native substrate proteins and provides a physical environment optimized to promote and accelerate protein folding. The sequence is that of Chaperonin GroEL from Buchnera aphidicola subsp. Thelaxes suberi.